The primary structure comprises 348 residues: Nitrogenase vanadium-iron protein beta chain (348 aa).

Residues Cys-31, Cys-56, Cys-115, and Ser-153 each coordinate [8Fe-7S] cluster.

The protein belongs to the NifD/NifK/NifE/NifN family. Hexamer of two alpha, two beta, and two delta chains. Requires [8Fe-7S] cluster as cofactor.

It catalyses the reaction N2 + 8 reduced [2Fe-2S]-[ferredoxin] + 16 ATP + 16 H2O = H2 + 8 oxidized [2Fe-2S]-[ferredoxin] + 2 NH4(+) + 16 ADP + 16 phosphate + 6 H(+). Its function is as follows. This vanadium-iron protein is part of the nitrogenase complex that catalyzes the key enzymatic reactions in nitrogen fixation. The chain is Nitrogenase vanadium-iron protein beta chain (vnfK) from Azotobacter salinestris.